The following is a 248-amino-acid chain: Small ribosomal subunit protein uS3 (248 aa).

Residues 38-106 (VREYLVKTLD…QVALNILEVK (69 aa)) enclose the KH type-2 domain. Residues 213 to 230 (ESEINAPAERRGRGDRNG) show a composition bias toward basic and acidic residues. Positions 213–248 (ESEINAPAERRGRGDRNGRPRRGGQRRQRSEQKQEG) are disordered.

This sequence belongs to the universal ribosomal protein uS3 family. Part of the 30S ribosomal subunit. Forms a tight complex with proteins S10 and S14.

Its function is as follows. Binds the lower part of the 30S subunit head. Binds mRNA in the 70S ribosome, positioning it for translation. This Corynebacterium diphtheriae (strain ATCC 700971 / NCTC 13129 / Biotype gravis) protein is Small ribosomal subunit protein uS3.